The chain runs to 286 residues: Elongation factor Ts (286 aa).

Residues 82–85 are involved in Mg(2+) ion dislocation from EF-Tu; the sequence is TDFV.

Belongs to the EF-Ts family.

Its subcellular location is the cytoplasm. Its function is as follows. Associates with the EF-Tu.GDP complex and induces the exchange of GDP to GTP. It remains bound to the aminoacyl-tRNA.EF-Tu.GTP complex up to the GTP hydrolysis stage on the ribosome. In Hahella chejuensis (strain KCTC 2396), this protein is Elongation factor Ts.